The chain runs to 94 residues: DNA-directed RNA polymerase subunit omega (94 aa).

It belongs to the RNA polymerase subunit omega family. As to quaternary structure, the RNAP catalytic core consists of 2 alpha, 1 beta, 1 beta' and 1 omega subunit. When a sigma factor is associated with the core the holoenzyme is formed, which can initiate transcription.

The enzyme catalyses RNA(n) + a ribonucleoside 5'-triphosphate = RNA(n+1) + diphosphate. Its function is as follows. Promotes RNA polymerase assembly. Latches the N- and C-terminal regions of the beta' subunit thereby facilitating its interaction with the beta and alpha subunits. The polypeptide is DNA-directed RNA polymerase subunit omega (Parafrankia sp. (strain EAN1pec)).